We begin with the raw amino-acid sequence, 246 residues long: Protein PHLOEM PROTEIN 2-LIKE A1 (246 aa).

As to expression, vascular tissues, specifically in phloem companion cell-sieve element complexes.

In Arabidopsis thaliana (Mouse-ear cress), this protein is Protein PHLOEM PROTEIN 2-LIKE A1 (PP2A1).